The chain runs to 101 residues: MNKSKRLFTKSKRSFRRRLPPIQSGDRIDYRNMSLISRFISEQGKILSRRVNRVTLKQQRLITIAINQARILSLLPFLNNQKQFERSESTPRTTSLRTRKK.

This sequence belongs to the bacterial ribosomal protein bS18 family. Part of the 30S ribosomal subunit.

Its subcellular location is the plastid. It localises to the chloroplast. This Lepidium virginicum (Virginia pepperweed) protein is Small ribosomal subunit protein bS18c.